We begin with the raw amino-acid sequence, 412 residues long: Serine hydroxymethyltransferase (412 aa).

Residues Leu-117 and 121–123 (GHL) contribute to the (6S)-5,6,7,8-tetrahydrofolate site. Lys-226 carries the N6-(pyridoxal phosphate)lysine modification. 349 to 351 (SPF) contributes to the (6S)-5,6,7,8-tetrahydrofolate binding site.

This sequence belongs to the SHMT family. In terms of assembly, homodimer. It depends on pyridoxal 5'-phosphate as a cofactor.

It localises to the cytoplasm. The enzyme catalyses (6R)-5,10-methylene-5,6,7,8-tetrahydrofolate + glycine + H2O = (6S)-5,6,7,8-tetrahydrofolate + L-serine. It participates in one-carbon metabolism; tetrahydrofolate interconversion. Its pathway is amino-acid biosynthesis; glycine biosynthesis; glycine from L-serine: step 1/1. Catalyzes the reversible interconversion of serine and glycine with tetrahydrofolate (THF) serving as the one-carbon carrier. This reaction serves as the major source of one-carbon groups required for the biosynthesis of purines, thymidylate, methionine, and other important biomolecules. Also exhibits THF-independent aldolase activity toward beta-hydroxyamino acids, producing glycine and aldehydes, via a retro-aldol mechanism. The sequence is that of Serine hydroxymethyltransferase from Geobacillus thermodenitrificans (strain NG80-2).